The sequence spans 133 residues: Small ribosomal subunit protein uS8 (133 aa).

This sequence belongs to the universal ribosomal protein uS8 family. Part of the 30S ribosomal subunit. Contacts proteins S5 and S12.

In terms of biological role, one of the primary rRNA binding proteins, it binds directly to 16S rRNA central domain where it helps coordinate assembly of the platform of the 30S subunit. This is Small ribosomal subunit protein uS8 from Trichormus variabilis (strain ATCC 29413 / PCC 7937) (Anabaena variabilis).